The primary structure comprises 234 residues: Multicopy suppressor of SEC21 protein 28 (234 aa).

Over Met-1–Arg-47 the chain is Cytoplasmic. Thr-3 is subject to Phosphothreonine. A helical membrane pass occupies residues Tyr-48–Phe-68. At Asn-69–Glu-72 the chain is on the extracellular side. A helical membrane pass occupies residues Ala-73–Leu-93. Topologically, residues Ser-94–Glu-234 are cytoplasmic. The COPI binding stretch occupies residues Lys-231 to Glu-234.

Belongs to the DUP/COS family. As to quaternary structure, interacts with MST27. Binds to coatomer proteins of COPI and SEC23/SEC24 of COPII coated vesicles.

It localises to the endoplasmic reticulum. It is found in the golgi apparatus. The protein localises to the cytoplasmic vesicle. The protein resides in the COPI-coated vesicle membrane. Its subcellular location is the COPII-coated vesicle membrane. In terms of biological role, involved in protein trafficking vesicle formation, probably by stabilizing of coatomer at the Golgi membrane and thus allowing the efficient formation of COPI coated vesicles. This is Multicopy suppressor of SEC21 protein 28 (MST28) from Saccharomyces cerevisiae (strain ATCC 204508 / S288c) (Baker's yeast).